The sequence spans 382 residues: Alkanesulfonate monooxygenase (382 aa).

The protein belongs to the SsuD family.

The catalysed reaction is an alkanesulfonate + FMNH2 + O2 = an aldehyde + FMN + sulfite + H2O + 2 H(+). Catalyzes the desulfonation of aliphatic sulfonates. This Pseudomonas putida (strain GB-1) protein is Alkanesulfonate monooxygenase.